We begin with the raw amino-acid sequence, 465 residues long: GTPase Der (465 aa).

EngA-type G domains are found at residues Pro3–Gly167 and Ile179–Leu352. GTP contacts are provided by residues Gly9–Ser16, Asp57–Met61, Asn119–Asp122, Gly185–Ser192, Asp232–Leu236, and Asn297–Asp300. A KH-like domain is found at Arg353 to Asp437.

It belongs to the TRAFAC class TrmE-Era-EngA-EngB-Septin-like GTPase superfamily. EngA (Der) GTPase family. In terms of assembly, associates with the 50S ribosomal subunit.

Functionally, GTPase that plays an essential role in the late steps of ribosome biogenesis. The chain is GTPase Der from Xylella fastidiosa (strain 9a5c).